A 162-amino-acid chain; its full sequence is Interleukin-15 (162 aa).

An N-terminal signal peptide occupies residues methionine 1–alanine 29. Residues glycine 30–alanine 48 constitute a propeptide that is removed on maturation. 2 disulfides stabilise this stretch: cysteine 83/cysteine 133 and cysteine 90/cysteine 136. Residue asparagine 127 is glycosylated (N-linked (GlcNAc...) asparagine).

Belongs to the IL-15/IL-21 family. Most abundant in placenta and skeletal muscle. It is also detected in the heart, lung, liver and kidney. IL15-S21AA is preferentially expressed in tissues such as testis and thymus.

It localises to the secreted. The protein localises to the cytoplasm. Its subcellular location is the nucleus. Cytokine that plays a major role in the development of inflammatory and protective immune responses to microbial invaders and parasites by modulating immune cells of both the innate and adaptive immune systems. Stimulates the proliferation of natural killer cells, T-cells and B-cells and promotes the secretion of several cytokines. In monocytes, induces the production of IL8 and monocyte chemotactic protein 1/CCL2, two chemokines that attract neutrophils and monocytes respectively to sites of infection. Unlike most cytokines, which are secreted in soluble form, IL15 is expressed in association with its high affinity IL15RA on the surface of IL15-producing cells and delivers signals to target cells that express IL2RB and IL2RG receptor subunits. Binding to its receptor triggers the phosphorylation of JAK1 and JAK3 and the recruitment and subsequent phosphorylation of signal transducer and activator of transcription-3/STAT3 and STAT5. In mast cells, induces the rapid tyrosine phosphorylation of STAT6 and thereby controls mast cell survival and release of cytokines such as IL4. In Homo sapiens (Human), this protein is Interleukin-15 (IL15).